The primary structure comprises 652 residues: DNA ligase (652 aa).

NAD(+)-binding positions include 30 to 34 (DEVYD), 79 to 80 (SL), and Glu108. Residue Lys110 is the N6-AMP-lysine intermediate of the active site. NAD(+) contacts are provided by Arg131, Glu165, Lys280, and Lys304. The Zn(2+) site is built by Cys398, Cys401, Cys414, and Cys419. In terms of domain architecture, BRCT spans 574-652 (AKENPFKGKS…DEMRSKIEQA (79 aa)).

Belongs to the NAD-dependent DNA ligase family. LigA subfamily. Requires Mg(2+) as cofactor. The cofactor is Mn(2+).

It catalyses the reaction NAD(+) + (deoxyribonucleotide)n-3'-hydroxyl + 5'-phospho-(deoxyribonucleotide)m = (deoxyribonucleotide)n+m + AMP + beta-nicotinamide D-nucleotide.. In terms of biological role, DNA ligase that catalyzes the formation of phosphodiester linkages between 5'-phosphoryl and 3'-hydroxyl groups in double-stranded DNA using NAD as a coenzyme and as the energy source for the reaction. It is essential for DNA replication and repair of damaged DNA. In Sulfurimonas denitrificans (strain ATCC 33889 / DSM 1251) (Thiomicrospira denitrificans (strain ATCC 33889 / DSM 1251)), this protein is DNA ligase.